We begin with the raw amino-acid sequence, 338 residues long: Lipoate-protein ligase A (338 aa).

One can recognise a BPL/LPL catalytic domain in the interval Pro29–Val216. ATP-binding positions include Arg71, Gly76–Phe79, and Lys134. Lys134 lines the (R)-lipoate pocket.

It belongs to the LplA family. Monomer.

The protein localises to the cytoplasm. It carries out the reaction L-lysyl-[lipoyl-carrier protein] + (R)-lipoate + ATP = N(6)-[(R)-lipoyl]-L-lysyl-[lipoyl-carrier protein] + AMP + diphosphate + H(+). It participates in protein modification; protein lipoylation via exogenous pathway; protein N(6)-(lipoyl)lysine from lipoate: step 1/2. It functions in the pathway protein modification; protein lipoylation via exogenous pathway; protein N(6)-(lipoyl)lysine from lipoate: step 2/2. In terms of biological role, catalyzes both the ATP-dependent activation of exogenously supplied lipoate to lipoyl-AMP and the transfer of the activated lipoyl onto the lipoyl domains of lipoate-dependent enzymes. The protein is Lipoate-protein ligase A of Vibrio cholerae serotype O1 (strain ATCC 39541 / Classical Ogawa 395 / O395).